The chain runs to 239 residues: Phosphoribosylaminoimidazole-succinocarboxamide synthase (239 aa).

It belongs to the SAICAR synthetase family.

It carries out the reaction 5-amino-1-(5-phospho-D-ribosyl)imidazole-4-carboxylate + L-aspartate + ATP = (2S)-2-[5-amino-1-(5-phospho-beta-D-ribosyl)imidazole-4-carboxamido]succinate + ADP + phosphate + 2 H(+). The protein operates within purine metabolism; IMP biosynthesis via de novo pathway; 5-amino-1-(5-phospho-D-ribosyl)imidazole-4-carboxamide from 5-amino-1-(5-phospho-D-ribosyl)imidazole-4-carboxylate: step 1/2. This Bacillus cytotoxicus (strain DSM 22905 / CIP 110041 / 391-98 / NVH 391-98) protein is Phosphoribosylaminoimidazole-succinocarboxamide synthase.